Reading from the N-terminus, the 122-residue chain is Small ribosomal subunit protein uS13 (122 aa).

The span at G95–T116 shows a compositional bias: basic residues. Residues G95–K122 are disordered.

Belongs to the universal ribosomal protein uS13 family. In terms of assembly, part of the 30S ribosomal subunit. Forms a loose heterodimer with protein S19. Forms two bridges to the 50S subunit in the 70S ribosome.

In terms of biological role, located at the top of the head of the 30S subunit, it contacts several helices of the 16S rRNA. In the 70S ribosome it contacts the 23S rRNA (bridge B1a) and protein L5 of the 50S subunit (bridge B1b), connecting the 2 subunits; these bridges are implicated in subunit movement. Contacts the tRNAs in the A and P-sites. This Campylobacter concisus (strain 13826) protein is Small ribosomal subunit protein uS13.